Reading from the N-terminus, the 275-residue chain is Large ribosomal subunit protein uL2 (275 aa).

Over residues 38-53 the composition is skewed to polar residues; that stretch reads SSKAGRNNNGRITTRH. Disordered stretches follow at residues 38–59 and 224–257; these read SSKA…GGHK and AMNP…KGFR.

This sequence belongs to the universal ribosomal protein uL2 family. As to quaternary structure, part of the 50S ribosomal subunit. Forms a bridge to the 30S subunit in the 70S ribosome.

Its function is as follows. One of the primary rRNA binding proteins. Required for association of the 30S and 50S subunits to form the 70S ribosome, for tRNA binding and peptide bond formation. It has been suggested to have peptidyltransferase activity; this is somewhat controversial. Makes several contacts with the 16S rRNA in the 70S ribosome. This Burkholderia multivorans (strain ATCC 17616 / 249) protein is Large ribosomal subunit protein uL2.